We begin with the raw amino-acid sequence, 955 residues long: 26S proteasome non-ATPase regulatory subunit 1 (955 aa).

Residues 279–313 form a disordered region; sequence PGSTNTGTVPGSEKDSDAMEAEEKPGSTCVGKSAE. The segment covering 290–303 has biased composition (basic and acidic residues); that stretch reads SEKDSDAMEAEEKP. PC repeat units follow at residues 403–436, 441–474, 476–510, 511–545, 547–580, 581–616, 617–649, 651–685, 686–726, and 729–761; these read TATA…PGSA, GGLY…DIVR, GGSL…VTGE, AAGL…EKIL, GLAV…ILRR, SGMY…DVRR, AAVE…PHVR, GAAM…YVRQ, GALI…DVMA, and GAIL…PSVV. Disordered regions lie at residues 839–879 and 932–955; these read AKKK…NFQL and AHGP…YIDD. 2 stretches are compositionally biased toward basic and acidic residues: residues 842-854 and 861-874; these read KEKE…KEEE and TEKK…KEPE. The span at 938 to 955 shows a compositional bias: acidic residues; that stretch reads EEEEQEPEPPEPFEYIDD.

Belongs to the proteasome subunit S1 family. As to quaternary structure, component of the 19S proteasome regulatory particle complex. The 26S proteasome consists of a 20S core particle (CP) and two 19S regulatory subunits (RP). The regulatory particle is made of a lid composed of 9 subunits, a base containing 6 ATPases and few additional components including PSMD1. Interacts with ADRM1.

Functionally, component of the 26S proteasome, a multiprotein complex involved in the ATP-dependent degradation of ubiquitinated proteins. This complex plays a key role in the maintenance of protein homeostasis by removing misfolded or damaged proteins, which could impair cellular functions, and by removing proteins whose functions are no longer required. Therefore, the proteasome participates in numerous cellular processes, including cell cycle progression, apoptosis, or DNA damage repair. The protein is 26S proteasome non-ATPase regulatory subunit 1 (PSMD1) of Gallus gallus (Chicken).